Here is a 437-residue protein sequence, read N- to C-terminus: MLDLKFIREHPGTVKHAIAVKGVNLDLDELLRIDRELVELRQRVEALQTERNANAKLVPKATPEERPHLIQKGKDLAEDIKALEPQLRAHEDQLRQLLLRVPNIPHPSVPVGQDDSENVELRREGQLPEFAFPPLDHVELLERQGWSDPERVARVSGSRSYLLKGDAVLLEMAVLMFALDFLRGRGLTPLSTTALVRPETLVGSGHFPGGEDQVYKIEGDELMLAGTAEVPVNSLYAGEQLSYEELPLAFAAISAAFRSEAGSAGRDVRGLIRVHEFRKVEQYVMTRADEAEALRWFGAILENAEGLLRALELPYRVVQNCTGDMGAGKVLMYDIETWVPSEGKYRETHSCSYLGDWQARRTGLRYRDEHGKLVYAHTLNNTGIATPRILVPLLENHQQADGTIRVPEALRPYLGGREVLGVPVRAAAAEAKSPRNK.

227–229 (TAE) contacts L-serine. ATP is bound by residues 258–260 (RSE) and Val274. Glu281 contacts L-serine. 347–350 (ETHS) contributes to the ATP binding site. Thr382 is a binding site for L-serine.

Belongs to the class-II aminoacyl-tRNA synthetase family. Type-1 seryl-tRNA synthetase subfamily. Homodimer. The tRNA molecule binds across the dimer.

The protein localises to the cytoplasm. It carries out the reaction tRNA(Ser) + L-serine + ATP = L-seryl-tRNA(Ser) + AMP + diphosphate + H(+). The enzyme catalyses tRNA(Sec) + L-serine + ATP = L-seryl-tRNA(Sec) + AMP + diphosphate + H(+). It participates in aminoacyl-tRNA biosynthesis; selenocysteinyl-tRNA(Sec) biosynthesis; L-seryl-tRNA(Sec) from L-serine and tRNA(Sec): step 1/1. Functionally, catalyzes the attachment of serine to tRNA(Ser). Is also able to aminoacylate tRNA(Sec) with serine, to form the misacylated tRNA L-seryl-tRNA(Sec), which will be further converted into selenocysteinyl-tRNA(Sec). The protein is Serine--tRNA ligase of Deinococcus geothermalis (strain DSM 11300 / CIP 105573 / AG-3a).